A 108-amino-acid polypeptide reads, in one-letter code: Protein S100-A15A (108 aa).

Residues 53–88 (KEPYYITELFQAADKNKDNQICFDEFLYILGKLVKD) enclose the EF-hand domain. Ca(2+)-binding residues include Asp-66, Asn-68, Asp-70, Gln-72, and Glu-77.

This sequence belongs to the S-100 family.

The polypeptide is Protein S100-A15A (S100A15A) (Pongo abelii (Sumatran orangutan)).